A 330-amino-acid polypeptide reads, in one-letter code: Ig gamma-2A chain C region, A allele (330 aa).

Ig-like domains are found at residues 6–98 (PSVY…KKIE), 121–220 (PSVF…RTIS), and 229–325 (PQVY…KSFS). Intrachain disulfides connect cysteine 27–cysteine 82, cysteine 144–cysteine 204, and cysteine 250–cysteine 308. Residue asparagine 180 is glycosylated (N-linked (GlcNAc...) asparagine).

The chain is Ig gamma-2A chain C region, A allele (Ighg) from Mus musculus (Mouse).